Here is an 85-residue protein sequence, read N- to C-terminus: UPF0298 protein SUB0431 (85 aa).

It belongs to the UPF0298 family.

It localises to the cytoplasm. In Streptococcus uberis (strain ATCC BAA-854 / 0140J), this protein is UPF0298 protein SUB0431.